A 23-amino-acid chain; its full sequence is Pseudin-3 (23 aa).

Expressed by the skin glands.

The protein resides in the secreted. Possesses antifungal activity against C.albicans and is also active against E.coli and S.aureus. In Pseudis paradoxa (Paradoxical frog), this protein is Pseudin-3.